The primary structure comprises 495 residues: Polybrominated aromatic compounds synthase (495 aa).

C437 lines the heme pocket.

This sequence belongs to the cytochrome P450 family. It depends on heme as a cofactor.

In terms of biological role, cytochrome P450 protein involved in the biosynthesis of polybrominated aromatic organic compounds. In the presence of ferredoxin, ferredoxin reductase and NADH, catalyzes the coupling of bromophenols and bromopyrroles, forming various polybrominated biphenyls and hydroxylated polybrominated diphenyl ethers (OH-BDE). Can also mediate the heterocoupling of 3,5-dibromocatechol, forming six different compounds, including polybrominated dibenzo-p-dioxins, which are among the most toxic molecules known to man. The polypeptide is Polybrominated aromatic compounds synthase (Marinomonas mediterranea (strain ATCC 700492 / JCM 21426 / NBRC 103028 / MMB-1)).